The sequence spans 917 residues: Nitrate reductase [NADH] 2 (917 aa).

The tract at residues 1–72 is disordered; sequence MAASVDNRQY…SEDENETHNS (72 aa). A compositionally biased stretch (polar residues) spans 37–47; the sequence is AHQNQTTNQTV. The segment covering 57–67 has biased composition (acidic residues); it reads DDEDVSSEDEN. C191 contributes to the Mo-molybdopterin binding site. A Cytochrome b5 heme-binding domain is found at 542–617; it reads AKMYSMSEVK…LEDYRIGELI (76 aa). Heme contacts are provided by H577 and H600. The FAD-binding FR-type domain maps to 660–772; the sequence is RAKVPVQLVE…KGPLGHVEYL (113 aa). FAD contacts are provided by residues 712 to 715, 729 to 733, F734, F741, 746 to 748, and T799; these read RAYT, VVKIY, and LMS.

It belongs to the nitrate reductase family. As to quaternary structure, homodimer. Requires FAD as cofactor. The cofactor is heme. Mo-molybdopterin serves as cofactor. In terms of tissue distribution, root, leaf, and shoot.

The enzyme catalyses nitrite + NAD(+) + H2O = nitrate + NADH + H(+). Nitrate reductase is a key enzyme involved in the first step of nitrate assimilation in plants, fungi and bacteria. This chain is Nitrate reductase [NADH] 2 (NIA2), found in Arabidopsis thaliana (Mouse-ear cress).